The following is an 821-amino-acid chain: DNA gyrase subunit A (821 aa).

Positions 35–500 (LPDVRDGLKP…GLETIEDEDL (466 aa)) constitute a Topo IIA-type catalytic domain. Catalysis depends on Tyr-123, which acts as the O-(5'-phospho-DNA)-tyrosine intermediate. A GyrA-box motif is present at residues 527–533 (QKRGGKG).

The protein belongs to the type II topoisomerase GyrA/ParC subunit family. As to quaternary structure, heterotetramer, composed of two GyrA and two GyrB chains. In the heterotetramer, GyrA contains the active site tyrosine that forms a transient covalent intermediate with DNA, while GyrB binds cofactors and catalyzes ATP hydrolysis.

It is found in the cytoplasm. The enzyme catalyses ATP-dependent breakage, passage and rejoining of double-stranded DNA.. In terms of biological role, a type II topoisomerase that negatively supercoils closed circular double-stranded (ds) DNA in an ATP-dependent manner to modulate DNA topology and maintain chromosomes in an underwound state. Negative supercoiling favors strand separation, and DNA replication, transcription, recombination and repair, all of which involve strand separation. Also able to catalyze the interconversion of other topological isomers of dsDNA rings, including catenanes and knotted rings. Type II topoisomerases break and join 2 DNA strands simultaneously in an ATP-dependent manner. The protein is DNA gyrase subunit A of Bacillus subtilis (strain 168).